A 435-amino-acid chain; its full sequence is Tol-Pal system protein TolB (435 aa).

The first 28 residues, 1–28 (MVKCSLIRALMVIAGLIGAAAFTTPANA), serve as a signal peptide directing secretion. Positions 288–310 (STAAIDTSPSYSPDGARVSFESD) are disordered.

It belongs to the TolB family. The Tol-Pal system is composed of five core proteins: the inner membrane proteins TolA, TolQ and TolR, the periplasmic protein TolB and the outer membrane protein Pal. They form a network linking the inner and outer membranes and the peptidoglycan layer.

It is found in the periplasm. Part of the Tol-Pal system, which plays a role in outer membrane invagination during cell division and is important for maintaining outer membrane integrity. The chain is Tol-Pal system protein TolB from Rhizobium leguminosarum bv. trifolii (strain WSM2304).